A 391-amino-acid chain; its full sequence is Ammonium transporter Amt1 (391 aa).

The Extracellular portion of the chain corresponds to Met-1–Ala-7. Residues Trp-8–Tyr-27 traverse the membrane as a helical segment. Residues Ala-28 to Asn-38 lie on the Cytoplasmic side of the membrane. Residues Met-39–Tyr-57 traverse the membrane as a helical segment. The Extracellular portion of the chain corresponds to Gly-58–Phe-89. Residues Met-90–Ser-106 traverse the membrane as a helical segment. The Cytoplasmic portion of the chain corresponds to Ala-107 to Lys-113. A helical transmembrane segment spans residues Val-114–Trp-137. The Extracellular segment spans residues Gly-138–Gly-152. Residues Gly-153–Thr-170 form a helical membrane-spanning segment. Over Ile-171–Pro-188 the chain is Cytoplasmic. The chain crosses the membrane as a helical span at residues Leu-189–Ser-208. Residues Ala-209–Ile-217 are Extracellular-facing. Residues Asn-218–Ile-237 form a helical membrane-spanning segment. Residues Gly-238–Gly-245 are Cytoplasmic-facing. A helical membrane pass occupies residues Ser-246–Ala-263. The Extracellular portion of the chain corresponds to Ala-264–Asp-268. A helical membrane pass occupies residues Val-269–Met-287. Residues Asp-288 to Asp-300 are Cytoplasmic-facing. The chain crosses the membrane as a helical span at residues Ala-301–Leu-319. Residues Ala-320–Leu-337 lie on the Extracellular side of the membrane. The chain crosses the membrane as a helical span at residues Leu-338–Val-363. Over Asp-364–Thr-391 the chain is Cytoplasmic.

It belongs to the ammonia transporter channel (TC 1.A.11.2) family. Homotrimer.

The protein resides in the cell membrane. In terms of biological role, involved in the uptake of ammonium/ammonia (NH(4)(+)/NH(3)). Transport is electrogenic. Transport the ammonium and methylammonium cation with high specificity. The chain is Ammonium transporter Amt1 from Archaeoglobus fulgidus (strain ATCC 49558 / DSM 4304 / JCM 9628 / NBRC 100126 / VC-16).